A 388-amino-acid chain; its full sequence is Cell adhesion molecule 4 (388 aa).

The N-terminal stretch at 1-20 is a signal peptide; sequence MGRARRFQWPLLLLWAAAAG. In terms of domain architecture, Ig-like V-type spans 21–119; it reads PGTAQEVQTE…DTHHQIATLT (99 aa). Topologically, residues 25 to 324 are extracellular; the sequence is QEVQTENVTV…VEAQTSVPYA (300 aa). Asparagine 31 and asparagine 67 each carry an N-linked (GlcNAc...) asparagine glycan. Intrachain disulfides connect cysteine 44/cysteine 104, cysteine 145/cysteine 199, and cysteine 245/cysteine 291. 2 Ig-like C2-type domains span residues 124-219 and 224-307; these read PENP…YVLD and PTAR…YVLV. Asparagine 286 is a glycosylation site (N-linked (GlcNAc...) asparagine). The helical transmembrane segment at 325–345 threads the bilayer; sequence IVGGILALLVFLIICVLVGMV. The Cytoplasmic portion of the chain corresponds to 346 to 388; it reads WCSVRQKGSYLTHEASGLDEQGEAREAFLNGSDGHKRKEEFFI. Position 361 is a phosphoserine (serine 361).

This sequence belongs to the nectin family. As to quaternary structure, monomer and homodimer. Post-translationally, N-glycosylated.

The protein localises to the membrane. In terms of biological role, involved in the cell-cell adhesion. Has calcium- and magnesium-independent cell-cell adhesion activity. May have tumor-suppressor activity. The polypeptide is Cell adhesion molecule 4 (Cadm4) (Rattus norvegicus (Rat)).